We begin with the raw amino-acid sequence, 147 residues long: DNA base-flipping protein (147 aa).

The protein belongs to the MGMT family. ATL subfamily. In terms of assembly, interacts with several proteins, including UvrA, UvrD and the three subunits of the RNA polymerase.

In terms of biological role, involved in DNA damage recognition. Binds DNA containing O(6)-methylguanine and larger O(6)-alkylguanine adducts. Binds to the damaged base and flips the base out of the DNA duplex into an extrahelical conformation, which allows processing by repair proteins. Also affects the regulation of gene expression in response to alkylation. The polypeptide is DNA base-flipping protein (Thermus thermophilus (strain ATCC 27634 / DSM 579 / HB8)).